The primary structure comprises 210 residues: Pyridoxine/pyridoxamine 5'-phosphate oxidase (210 aa).

Substrate contacts are provided by residues 7–10 and lysine 65; that span reads RQSY. FMN contacts are provided by residues 60–65, 75–76, arginine 81, lysine 82, and glutamine 104; these read RIVLIK and FT. Substrate is bound by residues tyrosine 122, arginine 126, and serine 130. Residues 139 to 140 and tryptophan 182 contribute to the FMN site; that span reads QS. 188–190 contributes to the substrate binding site; sequence RLH. Arginine 192 lines the FMN pocket.

It belongs to the pyridoxamine 5'-phosphate oxidase family. In terms of assembly, homodimer. FMN is required as a cofactor.

It catalyses the reaction pyridoxamine 5'-phosphate + O2 + H2O = pyridoxal 5'-phosphate + H2O2 + NH4(+). The catalysed reaction is pyridoxine 5'-phosphate + O2 = pyridoxal 5'-phosphate + H2O2. Its pathway is cofactor metabolism; pyridoxal 5'-phosphate salvage; pyridoxal 5'-phosphate from pyridoxamine 5'-phosphate: step 1/1. It functions in the pathway cofactor metabolism; pyridoxal 5'-phosphate salvage; pyridoxal 5'-phosphate from pyridoxine 5'-phosphate: step 1/1. In terms of biological role, catalyzes the oxidation of either pyridoxine 5'-phosphate (PNP) or pyridoxamine 5'-phosphate (PMP) into pyridoxal 5'-phosphate (PLP). The polypeptide is Pyridoxine/pyridoxamine 5'-phosphate oxidase (Bordetella avium (strain 197N)).